The chain runs to 84 residues: Xenoxin-1 (84 aa).

Positions 1–18 (MRYAIVFFLVCVITLGEA) are cleaved as a signal peptide. Intrachain disulfides connect Cys21–Cys42, Cys35–Cys55, Cys61–Cys76, and Cys77–Cys82.

In terms of tissue distribution, expressed by the skin dorsal glands.

The protein localises to the secreted. In terms of biological role, lacks alpha-neurotoxic activity, has apparently no antibacterial activity, nor anti-coagulant potency. This chain is Xenoxin-1 (xenoxin-1), found in Xenopus laevis (African clawed frog).